The sequence spans 314 residues: DNA-directed RNA polymerase subunit alpha (314 aa).

The alpha N-terminal domain (alpha-NTD) stretch occupies residues 1–228 (MIEIEKPRIE…EHLNIFVGLT (228 aa)). The tract at residues 245–314 (KEKVLEMSIE…DLGLGLRKED (70 aa)) is alpha C-terminal domain (alpha-CTD).

It belongs to the RNA polymerase alpha chain family. Homodimer. The RNAP catalytic core consists of 2 alpha, 1 beta, 1 beta' and 1 omega subunit. When a sigma factor is associated with the core the holoenzyme is formed, which can initiate transcription.

It carries out the reaction RNA(n) + a ribonucleoside 5'-triphosphate = RNA(n+1) + diphosphate. DNA-dependent RNA polymerase catalyzes the transcription of DNA into RNA using the four ribonucleoside triphosphates as substrates. This is DNA-directed RNA polymerase subunit alpha from Staphylococcus haemolyticus (strain JCSC1435).